The following is a 359-amino-acid chain: Tyrosine-protein phosphatase non-receptor type 7 (359 aa).

A disordered region spans residues 1–34 (MVQACEGRSRAQLPTLSLGADMTQPPPAKAPAKK). Residues 38 to 51 (LQERRGSSVALMLD) form an interaction with MAP kinases region. Ser44 is modified (phosphoserine). Thr66 carries the post-translational modification Phosphothreonine. Phosphoserine is present on residues Ser93 and Ser143. A Tyrosine-protein phosphatase domain is found at 97–349 (LEEEFLKIPS…QFLHHTLALY (253 aa)). Substrate-binding positions include Asp257, 290–296 (CSAGIGR), and Gln334. Cys290 serves as the catalytic Phosphocysteine intermediate. Cys290 carries the post-translational modification Cysteine sulfenic acid (-SOH).

It belongs to the protein-tyrosine phosphatase family. Non-receptor class subfamily. Post-translationally, oxidized at active site cysteine. Treatment with pervanadate (vanadate and H(2)O(2)) or with antigen enhanced oxidation of active site cysteine.

It is found in the cytoplasm. Its subcellular location is the cytoskeleton. It catalyses the reaction O-phospho-L-tyrosyl-[protein] + H2O = L-tyrosyl-[protein] + phosphate. Inhibited in cells after FCER1A triggering. Its function is as follows. May play a role in the regulation of T and B-lymphocyte development and signal transduction. The protein is Tyrosine-protein phosphatase non-receptor type 7 (Ptpn7) of Rattus norvegicus (Rat).